A 392-amino-acid chain; its full sequence is Formate-dependent phosphoribosylglycinamide formyltransferase (392 aa).

N(1)-(5-phospho-beta-D-ribosyl)glycinamide-binding positions include 22–23 and glutamate 82; that span reads EL. ATP-binding positions include arginine 114, lysine 155, 160 to 165, 195 to 198, and glutamate 203; these read SSGKGQ and EGVV. One can recognise an ATP-grasp domain in the interval 119 to 308; the sequence is RLAAEELQLP…EFALHVRAFL (190 aa). 2 residues coordinate Mg(2+): glutamate 267 and glutamate 279. N(1)-(5-phospho-beta-D-ribosyl)glycinamide-binding positions include aspartate 286, lysine 355, and 362–363; that span reads RR.

This sequence belongs to the PurK/PurT family. As to quaternary structure, homodimer.

The catalysed reaction is N(1)-(5-phospho-beta-D-ribosyl)glycinamide + formate + ATP = N(2)-formyl-N(1)-(5-phospho-beta-D-ribosyl)glycinamide + ADP + phosphate + H(+). It functions in the pathway purine metabolism; IMP biosynthesis via de novo pathway; N(2)-formyl-N(1)-(5-phospho-D-ribosyl)glycinamide from N(1)-(5-phospho-D-ribosyl)glycinamide (formate route): step 1/1. Involved in the de novo purine biosynthesis. Catalyzes the transfer of formate to 5-phospho-ribosyl-glycinamide (GAR), producing 5-phospho-ribosyl-N-formylglycinamide (FGAR). Formate is provided by PurU via hydrolysis of 10-formyl-tetrahydrofolate. The sequence is that of Formate-dependent phosphoribosylglycinamide formyltransferase from Shigella sonnei (strain Ss046).